The sequence spans 367 residues: Inner membrane amino-acid ABC transporter permease protein YhdY (367 aa).

Topologically, residues 1–36 are cytoplasmic; it reads MTKVLLSHPPRPASHNSSRAMVWVRKNLFSSWSNSL. Residues 37–57 form a helical membrane-spanning segment; the sequence is LTIGCIWLMWELIPPLLNWAF. The Periplasmic segment spans residues 58-99; that stretch reads LQANWVGSTRADCTKAGACWVFIHERFGQFMYGLYPHDQRWR. Residues 100-120 traverse the membrane as a helical segment; it reads INLALLIGLVSIAPMFWKILP. Residues 121-125 lie on the Cytoplasmic side of the membrane; sequence HRGRY. The chain crosses the membrane as a helical span at residues 126–146; the sequence is IAAWAVIYPLIVWWLMYGGFF. The Periplasmic segment spans residues 147–162; that stretch reads ALERVETRQWGGLTLT. Residues 159–353 enclose the ABC transmembrane type-1 domain; it reads LTLTLIIASV…IFCFSMSRYS (195 aa). A helical transmembrane segment spans residues 163–183; that stretch reads LIIASVGIAGALPWGILLALG. Over 184–192 the chain is Cytoplasmic; sequence RRSHMPIVR. Residues 193 to 213 form a helical membrane-spanning segment; it reads ILSVIFIEFWRGVPLITVLFM. At 214 to 233 the chain is on the periplasmic side; that stretch reads SSVMLPLFMAEGTSIDKLIR. A helical membrane pass occupies residues 234–254; it reads ALVGVILFQSAYVAEVVRGGL. Residues 255–291 are Cytoplasmic-facing; sequence QALPKGQYEAAESLALGYWKTQGLVILPQALKLVIPG. Residues 292–312 traverse the membrane as a helical segment; the sequence is LVNTIIALFKDTSLVIIIGLF. Residues 313-326 are Periplasmic-facing; the sequence is DLFSSVQQATVDPA. The chain crosses the membrane as a helical span at residues 327 to 347; sequence WLGMSTEGYVFAALIYWIFCF. At 348 to 367 the chain is on the cytoplasmic side; sequence SMSRYSQYLEKRFNTGRTPH.

This sequence belongs to the binding-protein-dependent transport system permease family. HisMQ subfamily.

The protein resides in the cell inner membrane. Functionally, probably part of the binding-protein-dependent transport system YdhWXYZ for an amino acid; probably responsible for the translocation of the substrate across the membrane. This Escherichia coli (strain K12) protein is Inner membrane amino-acid ABC transporter permease protein YhdY (yhdY).